The sequence spans 388 residues: ATP phosphoribosyltransferase regulatory subunit (388 aa).

This sequence belongs to the class-II aminoacyl-tRNA synthetase family. HisZ subfamily. Heteromultimer composed of HisG and HisZ subunits.

It localises to the cytoplasm. It functions in the pathway amino-acid biosynthesis; L-histidine biosynthesis; L-histidine from 5-phospho-alpha-D-ribose 1-diphosphate: step 1/9. Its function is as follows. Required for the first step of histidine biosynthesis. May allow the feedback regulation of ATP phosphoribosyltransferase activity by histidine. The chain is ATP phosphoribosyltransferase regulatory subunit from Acinetobacter baumannii (strain SDF).